The primary structure comprises 338 residues: Holliday junction branch migration complex subunit RuvB (338 aa).

The segment at 1–180 (MERLLDNKFS…FGIIERLDYY (180 aa)) is large ATPase domain (RuvB-L). Leu19, Arg20, Gly61, Lys64, Thr65, Thr66, Arg170, Tyr180, and Arg217 together coordinate ATP. Thr65 is a Mg(2+) binding site. A small ATPAse domain (RuvB-S) region spans residues 181 to 251 (TVEELSQIVM…VAKSGLEMFE (71 aa)). The tract at residues 254–338 (EYGLDLVDRN…FKLKESGDNR (85 aa)) is head domain (RuvB-H). Residues Lys309 and Arg314 each coordinate DNA.

Belongs to the RuvB family. In terms of assembly, homohexamer. Forms an RuvA(8)-RuvB(12)-Holliday junction (HJ) complex. HJ DNA is sandwiched between 2 RuvA tetramers; dsDNA enters through RuvA and exits via RuvB. An RuvB hexamer assembles on each DNA strand where it exits the tetramer. Each RuvB hexamer is contacted by two RuvA subunits (via domain III) on 2 adjacent RuvB subunits; this complex drives branch migration. In the full resolvosome a probable DNA-RuvA(4)-RuvB(12)-RuvC(2) complex forms which resolves the HJ.

The protein resides in the cytoplasm. The enzyme catalyses ATP + H2O = ADP + phosphate + H(+). Its function is as follows. The RuvA-RuvB-RuvC complex processes Holliday junction (HJ) DNA during genetic recombination and DNA repair, while the RuvA-RuvB complex plays an important role in the rescue of blocked DNA replication forks via replication fork reversal (RFR). RuvA specifically binds to HJ cruciform DNA, conferring on it an open structure. The RuvB hexamer acts as an ATP-dependent pump, pulling dsDNA into and through the RuvAB complex. RuvB forms 2 homohexamers on either side of HJ DNA bound by 1 or 2 RuvA tetramers; 4 subunits per hexamer contact DNA at a time. Coordinated motions by a converter formed by DNA-disengaged RuvB subunits stimulates ATP hydrolysis and nucleotide exchange. Immobilization of the converter enables RuvB to convert the ATP-contained energy into a lever motion, pulling 2 nucleotides of DNA out of the RuvA tetramer per ATP hydrolyzed, thus driving DNA branch migration. The RuvB motors rotate together with the DNA substrate, which together with the progressing nucleotide cycle form the mechanistic basis for DNA recombination by continuous HJ branch migration. Branch migration allows RuvC to scan DNA until it finds its consensus sequence, where it cleaves and resolves cruciform DNA. This Caldicellulosiruptor bescii (strain ATCC BAA-1888 / DSM 6725 / KCTC 15123 / Z-1320) (Anaerocellum thermophilum) protein is Holliday junction branch migration complex subunit RuvB.